Reading from the N-terminus, the 253-residue chain is ATP synthase subunit a (253 aa).

Transmembrane regions (helical) follow at residues 30 to 50 (FTNA…VLLA), 88 to 108 (FFPF…IGLV), 118 to 138 (IAVT…YGLI), 144 to 164 (FLGI…MIMI), 184 to 204 (MLAG…LLGA), and 211 to 231 (VAPL…LVAF).

This sequence belongs to the ATPase A chain family. As to quaternary structure, F-type ATPases have 2 components, CF(1) - the catalytic core - and CF(0) - the membrane proton channel. CF(1) has five subunits: alpha(3), beta(3), gamma(1), delta(1), epsilon(1). CF(0) has three main subunits: a(1), b(2) and c(9-12). The alpha and beta chains form an alternating ring which encloses part of the gamma chain. CF(1) is attached to CF(0) by a central stalk formed by the gamma and epsilon chains, while a peripheral stalk is formed by the delta and b chains.

The protein localises to the cell inner membrane. In terms of biological role, key component of the proton channel; it plays a direct role in the translocation of protons across the membrane. The sequence is that of ATP synthase subunit a from Beijerinckia indica subsp. indica (strain ATCC 9039 / DSM 1715 / NCIMB 8712).